The following is a 391-amino-acid chain: NADH-quinone oxidoreductase subunit D (391 aa).

This sequence belongs to the complex I 49 kDa subunit family. As to quaternary structure, NDH-1 is composed of 14 different subunits. Subunits NuoB, C, D, E, F, and G constitute the peripheral sector of the complex.

The protein localises to the cell inner membrane. The catalysed reaction is a quinone + NADH + 5 H(+)(in) = a quinol + NAD(+) + 4 H(+)(out). Its function is as follows. NDH-1 shuttles electrons from NADH, via FMN and iron-sulfur (Fe-S) centers, to quinones in the respiratory chain. The immediate electron acceptor for the enzyme in this species is believed to be ubiquinone. Couples the redox reaction to proton translocation (for every two electrons transferred, four hydrogen ions are translocated across the cytoplasmic membrane), and thus conserves the redox energy in a proton gradient. In Rickettsia felis (strain ATCC VR-1525 / URRWXCal2) (Rickettsia azadi), this protein is NADH-quinone oxidoreductase subunit D.